The following is a 211-amino-acid chain: RNA chaperone ProQ (211 aa).

Positions 112–148 (ERRAVEKANNPKANKKRSVHHSGNKSENKKSAGKKFS) are disordered. Over residues 124–134 (ANKKRSVHHSG) the composition is skewed to basic residues.

This sequence belongs to the ProQ family.

The protein localises to the cytoplasm. Its function is as follows. RNA chaperone with significant RNA binding, RNA strand exchange and RNA duplexing activities. The polypeptide is RNA chaperone ProQ (Histophilus somni (strain 2336) (Haemophilus somnus)).